A 282-amino-acid chain; its full sequence is Probable methylxanthine N7-demethylase NdmC (282 aa).

The enzyme catalyses 7-methylxanthine + NADPH + O2 + H(+) = xanthine + formaldehyde + NADP(+) + H2O. It catalyses the reaction 7-methylxanthine + NADH + O2 + H(+) = xanthine + formaldehyde + NAD(+) + H2O. Functionally, involved in the caffeine degradation, which is the essential first step for assimilating the carbon and nitrogen in caffeine. Probably catalyzes the N7-demethylation of 7-methylxanthine to produce xanthine and formaldehyde. The protein is Probable methylxanthine N7-demethylase NdmC of Pseudomonas sp. (strain TJI-51).